Reading from the N-terminus, the 385-residue chain is Prophage integrase IntS (385 aa).

A Core-binding (CB) domain is found at 91–172 (NSFSAIYKEW…RCGEVFRYAI (82 aa)). In terms of domain architecture, Tyr recombinase spans 195–373 (KNFPFLPADQ…QYLDKRREMM (179 aa)). Active-site residues include arginine 234, lysine 261, histidine 324, arginine 327, and histidine 350. The active-site O-(3'-phospho-DNA)-tyrosine intermediate is tyrosine 360.

Belongs to the 'phage' integrase family.

Functionally, integrase is necessary for integration of the phage into the host genome by site-specific recombination. In conjunction with excisionase, integrase is also necessary for excision of the prophage from the host genome. This is Prophage integrase IntS (intS) from Escherichia coli (strain K12).